Reading from the N-terminus, the 188-residue chain is dCTP deaminase (188 aa).

Residues 111–116 (KSTYAR), 135–137 (TLE), glutamine 156, tyrosine 170, and glutamine 180 contribute to the dCTP site. The Proton donor/acceptor role is filled by glutamate 137.

Belongs to the dCTP deaminase family. In terms of assembly, homotrimer.

The enzyme catalyses dCTP + H2O + H(+) = dUTP + NH4(+). It participates in pyrimidine metabolism; dUMP biosynthesis; dUMP from dCTP (dUTP route): step 1/2. Its function is as follows. Catalyzes the deamination of dCTP to dUTP. The polypeptide is dCTP deaminase (Cupriavidus metallidurans (strain ATCC 43123 / DSM 2839 / NBRC 102507 / CH34) (Ralstonia metallidurans)).